The sequence spans 468 residues: Tubulin gamma chain (468 aa).

142 to 148 is a GTP binding site; sequence AGGTGSG.

Belongs to the tubulin family.

The protein localises to the cytoplasm. It is found in the cytoskeleton. Its subcellular location is the microtubule organizing center. In terms of biological role, tubulin is the major constituent of microtubules. The gamma chain is found at microtubule organizing centers (MTOC) such as the spindle poles, suggesting that it is involved in the minus-end nucleation of microtubule assembly. The polypeptide is Tubulin gamma chain (TUBG) (Chlamydomonas reinhardtii (Chlamydomonas smithii)).